Here is a 101-residue protein sequence, read N- to C-terminus: Enhancer of yellow 2 transcription factor (101 aa).

Belongs to the ENY2 family. Component of the nuclear pore complex (NPC)-associated AMEX complex (anchoring and mRNA export complex), composed of at least e(y)2 and xmas-2. Component of the SAGA transcription coactivator-HAT complexes, at least composed of Ada2b, e(y)2, Pcaf/Gcn5, Taf10 and Nipped-A/Trrap. Within the SAGA complex, e(y)2, Sgf11, and not/nonstop form an additional subcomplex of SAGA called the DUB module (deubiquitination module). Component of the THO complex, composed of at least e(y)2, HPR1, THO2, THOC5, THOC6 and THOC7. Interacts with e(y)1. Interacts with su(Hw) (via zinc fingers). Interacts with xmas-2; required for localization to the nuclear periphery. Interacts with the nuclear pore complex (NPC).

The protein localises to the nucleus. It is found in the nucleoplasm. The protein resides in the cytoplasm. Its function is as follows. Involved in mRNA export coupled transcription activation by association with both the AMEX and the SAGA complexes. The SAGA complex is a multiprotein complex that activates transcription by remodeling chromatin and mediating histone acetylation and deubiquitination. Within the SAGA complex, participates in a subcomplex that specifically deubiquitinates histone H2B. The SAGA complex is recruited to specific gene promoters by activators, where it is required for transcription. Required for nuclear receptor-mediated transactivation. Involved in transcription elongation by recruiting the THO complex onto nascent mRNA. The AMEX complex functions in docking export-competent ribonucleoprotein particles (mRNPs) to the nuclear entrance of the nuclear pore complex (nuclear basket). AMEX participates in mRNA export and accurate chromatin positioning in the nucleus by tethering genes to the nuclear periphery. This chain is Enhancer of yellow 2 transcription factor, found in Drosophila simulans (Fruit fly).